Consider the following 373-residue polypeptide: Histidinol-phosphate aminotransferase (373 aa).

N6-(pyridoxal phosphate)lysine is present on K230.

The protein belongs to the class-II pyridoxal-phosphate-dependent aminotransferase family. Histidinol-phosphate aminotransferase subfamily. As to quaternary structure, homodimer. The cofactor is pyridoxal 5'-phosphate.

The enzyme catalyses L-histidinol phosphate + 2-oxoglutarate = 3-(imidazol-4-yl)-2-oxopropyl phosphate + L-glutamate. The protein operates within amino-acid biosynthesis; L-histidine biosynthesis; L-histidine from 5-phospho-alpha-D-ribose 1-diphosphate: step 7/9. The protein is Histidinol-phosphate aminotransferase of Synechococcus sp. (strain ATCC 27144 / PCC 6301 / SAUG 1402/1) (Anacystis nidulans).